The primary structure comprises 293 residues: N-acetylneuraminate lyase (293 aa).

The aceneuramate site is built by Ser-47 and Thr-48. Tyr-136 (proton donor) is an active-site residue. The Schiff-base intermediate with substrate role is filled by Lys-164. Positions 166, 188, 190, 191, and 207 each coordinate aceneuramate.

The protein belongs to the DapA family. NanA subfamily. Homotetramer.

The protein resides in the cytoplasm. It catalyses the reaction aceneuramate = aldehydo-N-acetyl-D-mannosamine + pyruvate. It participates in amino-sugar metabolism; N-acetylneuraminate degradation; D-fructose 6-phosphate from N-acetylneuraminate: step 1/5. In terms of biological role, catalyzes the reversible aldol cleavage of N-acetylneuraminic acid (sialic acid; Neu5Ac) to form pyruvate and N-acetylmannosamine (ManNAc) via a Schiff base intermediate. This Haemophilus influenzae (strain ATCC 51907 / DSM 11121 / KW20 / Rd) protein is N-acetylneuraminate lyase.